A 282-amino-acid polypeptide reads, in one-letter code: Probable transcription factor At1g66420 (282 aa).

The disordered stretch occupies residues 33–73 (SKKNEEFCGGSGKVQPSEMKRRSEGTSTDMTSKRAKKVSAE).

The protein belongs to the GeBP family.

The polypeptide is Probable transcription factor At1g66420 (Arabidopsis thaliana (Mouse-ear cress)).